Reading from the N-terminus, the 374-residue chain is Patatin-2-Kuras 4 (374 aa).

The first 11 residues, 1-11 (MILATTSSTCA), serve as a signal peptide directing secretion. In terms of domain architecture, PNPLA spans 20-217 (LSIDGGGIKG…TVGDPALLSL (198 aa)). Residues 24 to 29 (GGGIKG) carry the GXGXXG motif. Residues 63-67 (GTSTG) carry the GXSXG motif. Ser-65 (nucleophile) is an active-site residue. A glycan (N-linked (GlcNAc...) asparagine) is linked at Asn-103. Catalysis depends on Asp-203, which acts as the Proton acceptor. The DGA/G signature appears at 203–205 (DGG). A coiled-coil region spans residues 309-372 (ENALTGTTTE…DRKKLRANKA (64 aa)).

The protein belongs to the patatin family.

Its subcellular location is the vacuole. Functionally, probable lipolytic acyl hydrolase (LAH), an activity which is thought to be involved in the response of tubers to pathogens. This is Patatin-2-Kuras 4 (pat2-k4) from Solanum tuberosum (Potato).